The sequence spans 618 residues: DNA mismatch repair protein MutL (618 aa).

Polar residues predominate over residues 348 to 359 (QTDTARSPTGNF). The disordered stretch occupies residues 348 to 400 (QTDTARSPTGNFESGEVFDYPKSQLQPSHSVSSGGASLGSRSAGGSGGAYRAT). Residues 377 to 388 (SVSSGGASLGSR) are compositionally biased toward low complexity.

This sequence belongs to the DNA mismatch repair MutL/HexB family.

In terms of biological role, this protein is involved in the repair of mismatches in DNA. It is required for dam-dependent methyl-directed DNA mismatch repair. May act as a 'molecular matchmaker', a protein that promotes the formation of a stable complex between two or more DNA-binding proteins in an ATP-dependent manner without itself being part of a final effector complex. The sequence is that of DNA mismatch repair protein MutL from Pseudoalteromonas translucida (strain TAC 125).